Consider the following 319-residue polypeptide: MNLEIMQNSLVNFAFGGLLIAMLVYWISLAFPGIGGLNRLATLITLLVNIALTLTLSSRWFANGYFPLSNLYESLLFLAWGLTFVHLFIENKTKSRLIGATAIPVAMFVTAFASLALPLEMQKASPLVPALKSNWLMMHVSIMMLSYAILILGSLLSILFLIITKGKDINLKGSSIGTGSYKVKNTDAKSTLIFSSQVGIVQEQSNMLINSTRMNLLESIDNLSYRTIGLGFPLLTIGIIAGAVWANEAWGSYWSWDPKETWALITWLIFAAYLHSRITKSWQGKKPAILASLGFLVVWICYLGVNFLGKGLHSYGWLA.

8 consecutive transmembrane segments (helical) span residues A14–I34, G36–L56, S69–I89, L97–L117, I142–I162, T227–N247, W254–L274, and A288–L308.

Belongs to the CcmF/CycK/Ccl1/NrfE/CcsA family. As to quaternary structure, may interact with Ccs1.

It localises to the plastid. Its subcellular location is the chloroplast thylakoid membrane. Required during biogenesis of c-type cytochromes (cytochrome c6 and cytochrome f) at the step of heme attachment. The chain is Cytochrome c biogenesis protein CcsA from Pyropia yezoensis (Susabi-nori).